The primary structure comprises 355 residues: 3-isopropylmalate dehydrogenase (355 aa).

Residues Arg90, Arg100, Arg128, and Asp222 each contribute to the substrate site. Mg(2+) contacts are provided by Asp222, Asp246, and Asp250. 280–292 (GSAPDIAGKGVAN) is an NAD(+) binding site.

This sequence belongs to the isocitrate and isopropylmalate dehydrogenases family. LeuB type 1 subfamily. As to quaternary structure, homodimer. The cofactor is Mg(2+). It depends on Mn(2+) as a cofactor.

The protein localises to the cytoplasm. The enzyme catalyses (2R,3S)-3-isopropylmalate + NAD(+) = 4-methyl-2-oxopentanoate + CO2 + NADH. The protein operates within amino-acid biosynthesis; L-leucine biosynthesis; L-leucine from 3-methyl-2-oxobutanoate: step 3/4. Functionally, catalyzes the oxidation of 3-carboxy-2-hydroxy-4-methylpentanoate (3-isopropylmalate) to 3-carboxy-4-methyl-2-oxopentanoate. The product decarboxylates to 4-methyl-2 oxopentanoate. The polypeptide is 3-isopropylmalate dehydrogenase (Cupriavidus pinatubonensis (strain JMP 134 / LMG 1197) (Cupriavidus necator (strain JMP 134))).